The primary structure comprises 231 residues: 7-cyano-7-deazaguanine synthase (231 aa).

F8–L18 serves as a coordination point for ATP. Zn(2+) contacts are provided by C188, C197, C200, and C203.

This sequence belongs to the QueC family. Requires Zn(2+) as cofactor.

It catalyses the reaction 7-carboxy-7-deazaguanine + NH4(+) + ATP = 7-cyano-7-deazaguanine + ADP + phosphate + H2O + H(+). Its pathway is purine metabolism; 7-cyano-7-deazaguanine biosynthesis. Its function is as follows. Catalyzes the ATP-dependent conversion of 7-carboxy-7-deazaguanine (CDG) to 7-cyano-7-deazaguanine (preQ(0)). The chain is 7-cyano-7-deazaguanine synthase from Sodalis glossinidius (strain morsitans).